The primary structure comprises 227 residues: Phosphoribosylformylglycinamidine synthase subunit PurQ (227 aa).

The Glutamine amidotransferase type-1 domain occupies 3–225 (FAVIVFPGSN…LKYWRETYVV (223 aa)). Residue Cys-86 is the Nucleophile of the active site. Active-site residues include His-194 and Glu-196.

As to quaternary structure, part of the FGAM synthase complex composed of 1 PurL, 1 PurQ and 2 PurS subunits.

Its subcellular location is the cytoplasm. The catalysed reaction is N(2)-formyl-N(1)-(5-phospho-beta-D-ribosyl)glycinamide + L-glutamine + ATP + H2O = 2-formamido-N(1)-(5-O-phospho-beta-D-ribosyl)acetamidine + L-glutamate + ADP + phosphate + H(+). The enzyme catalyses L-glutamine + H2O = L-glutamate + NH4(+). The protein operates within purine metabolism; IMP biosynthesis via de novo pathway; 5-amino-1-(5-phospho-D-ribosyl)imidazole from N(2)-formyl-N(1)-(5-phospho-D-ribosyl)glycinamide: step 1/2. Its function is as follows. Part of the phosphoribosylformylglycinamidine synthase complex involved in the purines biosynthetic pathway. Catalyzes the ATP-dependent conversion of formylglycinamide ribonucleotide (FGAR) and glutamine to yield formylglycinamidine ribonucleotide (FGAM) and glutamate. The FGAM synthase complex is composed of three subunits. PurQ produces an ammonia molecule by converting glutamine to glutamate. PurL transfers the ammonia molecule to FGAR to form FGAM in an ATP-dependent manner. PurS interacts with PurQ and PurL and is thought to assist in the transfer of the ammonia molecule from PurQ to PurL. The chain is Phosphoribosylformylglycinamidine synthase subunit PurQ from Bacillus cytotoxicus (strain DSM 22905 / CIP 110041 / 391-98 / NVH 391-98).